The sequence spans 351 residues: Outer membrane porin PhoE (351 aa).

An N-terminal signal peptide occupies residues 1–21 (MKKSTLALVVMGIVASASVQA).

Belongs to the Gram-negative porin family. Homotrimer. Forms mixed heterotrimers with OmpC and with OmpF; other mixed heterotrimers are also probable.

The protein localises to the cell outer membrane. Uptake of inorganic phosphate, phosphorylated compounds, and some other negatively charged solutes. The polypeptide is Outer membrane porin PhoE (phoE) (Escherichia coli (strain K12)).